The sequence spans 587 residues: Arginine--tRNA ligase (587 aa).

The 'HIGH' region signature appears at 127-137 (PNLAKEMHVGH).

This sequence belongs to the class-I aminoacyl-tRNA synthetase family. As to quaternary structure, monomer.

Its subcellular location is the cytoplasm. The catalysed reaction is tRNA(Arg) + L-arginine + ATP = L-arginyl-tRNA(Arg) + AMP + diphosphate. This Pseudomonas aeruginosa (strain UCBPP-PA14) protein is Arginine--tRNA ligase.